A 225-amino-acid chain; its full sequence is UPF0758 protein NMCC_1157 (225 aa).

The 123-residue stretch at Val102–Met224 folds into the MPN domain. Positions 173, 175, and 186 each coordinate Zn(2+). Positions His173–Asp186 match the JAMM motif motif.

This sequence belongs to the UPF0758 family.

The chain is UPF0758 protein NMCC_1157 from Neisseria meningitidis serogroup C (strain 053442).